The primary structure comprises 134 residues: Phosphoribosyl-AMP cyclohydrolase (134 aa).

Position 80 (aspartate 80) interacts with Mg(2+). Cysteine 81 provides a ligand contact to Zn(2+). Residues aspartate 82 and aspartate 84 each coordinate Mg(2+). Residues cysteine 98 and cysteine 105 each coordinate Zn(2+).

Belongs to the PRA-CH family. In terms of assembly, homodimer. Mg(2+) is required as a cofactor. It depends on Zn(2+) as a cofactor.

The protein localises to the cytoplasm. It carries out the reaction 1-(5-phospho-beta-D-ribosyl)-5'-AMP + H2O = 1-(5-phospho-beta-D-ribosyl)-5-[(5-phospho-beta-D-ribosylamino)methylideneamino]imidazole-4-carboxamide. The protein operates within amino-acid biosynthesis; L-histidine biosynthesis; L-histidine from 5-phospho-alpha-D-ribose 1-diphosphate: step 3/9. Its function is as follows. Catalyzes the hydrolysis of the adenine ring of phosphoribosyl-AMP. The sequence is that of Phosphoribosyl-AMP cyclohydrolase from Bordetella petrii (strain ATCC BAA-461 / DSM 12804 / CCUG 43448).